Consider the following 651-residue polypeptide: p-hydroxybenzoic acid efflux pump subunit AaeB (651 aa).

The next 11 helical transmembrane spans lie at 11–31 (FACKLSLAVVLSLVLGFWFEM), 41–61 (AAIVAAGPAFVAGGDPFSGAI), 65–85 (GLLRILGTFIGCFGALVIIMT), 91–111 (VVMLMLCCLWAGVCVWISSLV), 117–137 (YVFALAGYTALIIIITSQSSP), 150–170 (EIILGIVCVILADLVFSPRSV), 367–387 (LFWLLTGWTSGSVCMVMLGVV), 404–424 (FLIGTLIALPLGAVMFMLVLP), 428–448 (QSLLLLGLCIGVMTFVIGIEI), 454–474 (GSLGALASTINILVLDNPMTF), and 480–500 (LDNAIGQIIGCVLALAVIMLI).

It belongs to the aromatic acid exporter ArAE (TC 2.A.85) family.

It localises to the cell inner membrane. Functionally, forms an efflux pump with AaeA. Could function as a metabolic relief valve, allowing to eliminate certain compounds when they accumulate to high levels in the cell. The sequence is that of p-hydroxybenzoic acid efflux pump subunit AaeB from Musicola paradisiaca (strain Ech703) (Dickeya paradisiaca).